Here is a 325-residue protein sequence, read N- to C-terminus: Replication factor C small subunit (325 aa).

Position 47–54 (47–54) interacts with ATP; sequence GPPGTGKT.

This sequence belongs to the activator 1 small subunits family. RfcS subfamily. Heteromultimer composed of small subunits (RfcS) and large subunits (RfcL).

Functionally, part of the RFC clamp loader complex which loads the PCNA sliding clamp onto DNA. This is Replication factor C small subunit from Aeropyrum pernix (strain ATCC 700893 / DSM 11879 / JCM 9820 / NBRC 100138 / K1).